A 1700-amino-acid chain; its full sequence is RNA replication protein (1700 aa).

In terms of domain architecture, Alphavirus-like MT spans 299 to 462 (DPYAVRSHTH…VHEVKNSNWL (164 aa)). Residues 842–991 (VLITSDEAGE…LFAPLSPFYL (150 aa)) form the (+)RNA virus helicase ATP-binding domain. Residue 868–875 (GAGGAGKT) coordinates ATP. The (+)RNA virus helicase C-terminal domain maps to 992 to 1128 (NWTWRMTRPV…LVREYELNQP (137 aa)). In terms of domain architecture, RdRp catalytic spans 1369–1480 (GHATINDCEA…SVKPAFKELE (112 aa)).

This sequence belongs to the potexvirus/carlavirus RNA replication protein family.

The enzyme catalyses RNA(n) + a ribonucleoside 5'-triphosphate = RNA(n+1) + diphosphate. It catalyses the reaction ATP + H2O = ADP + phosphate + H(+). In terms of biological role, RNA replication. The protein possibly functions as an ATP-binding helicase. This is RNA replication protein from Sclerotinia sclerotiorum (White mold).